The following is a 292-amino-acid chain: N-acetylneuraminate lyase (292 aa).

Aceneuramate is bound by residues serine 47 and threonine 48. Catalysis depends on tyrosine 136, which acts as the Proton donor. Catalysis depends on lysine 164, which acts as the Schiff-base intermediate with substrate. 5 residues coordinate aceneuramate: threonine 166, glycine 188, aspartate 190, glutamate 191, and serine 207.

It belongs to the DapA family. NanA subfamily. Homotetramer.

It is found in the cytoplasm. It catalyses the reaction aceneuramate = aldehydo-N-acetyl-D-mannosamine + pyruvate. Its pathway is amino-sugar metabolism; N-acetylneuraminate degradation; D-fructose 6-phosphate from N-acetylneuraminate: step 1/5. Its function is as follows. Catalyzes the reversible aldol cleavage of N-acetylneuraminic acid (sialic acid; Neu5Ac) to form pyruvate and N-acetylmannosamine (ManNAc) via a Schiff base intermediate. In Actinobacillus pleuropneumoniae serotype 5b (strain L20), this protein is N-acetylneuraminate lyase.